The chain runs to 377 residues: Chaperone protein DnaJ (377 aa).

Residues 5-70 enclose the J domain; the sequence is DYYEVLGVAK…QKRAAYDRYG (66 aa). A CR-type zinc finger spans residues 137 to 215; the sequence is GFDTEIRVPS…CDGVGRTRRN (79 aa). Zn(2+) contacts are provided by Cys-150, Cys-153, Cys-167, Cys-170, Cys-189, Cys-192, Cys-203, and Cys-206. 4 CXXCXGXG motif repeats span residues 150–157, 167–174, 189–196, and 203–210; these read CDTCHGSG, CRTCGGSG, CPTCHGTG, and CPSCDGVG.

This sequence belongs to the DnaJ family. Homodimer. Zn(2+) serves as cofactor.

Its subcellular location is the cytoplasm. In terms of biological role, participates actively in the response to hyperosmotic and heat shock by preventing the aggregation of stress-denatured proteins and by disaggregating proteins, also in an autonomous, DnaK-independent fashion. Unfolded proteins bind initially to DnaJ; upon interaction with the DnaJ-bound protein, DnaK hydrolyzes its bound ATP, resulting in the formation of a stable complex. GrpE releases ADP from DnaK; ATP binding to DnaK triggers the release of the substrate protein, thus completing the reaction cycle. Several rounds of ATP-dependent interactions between DnaJ, DnaK and GrpE are required for fully efficient folding. Also involved, together with DnaK and GrpE, in the DNA replication of plasmids through activation of initiation proteins. The sequence is that of Chaperone protein DnaJ from Bordetella parapertussis (strain 12822 / ATCC BAA-587 / NCTC 13253).